Consider the following 239-residue polypeptide: Putative CCR4-associated factor 1 homolog 8 (239 aa).

A divalent metal cation-binding residues include aspartate 17, glutamate 19, aspartate 133, and asparagine 204.

The protein belongs to the CAF1 family. As to quaternary structure, component of the CCR4-NOT complex, at least composed of CRR4 and CAF1 proteins. The cofactor is a divalent metal cation.

The protein resides in the nucleus. It is found in the cytoplasm. The catalysed reaction is Exonucleolytic cleavage of poly(A) to 5'-AMP.. Ubiquitous transcription factor required for a diverse set of processes. It is a component of the CCR4 complex involved in the control of gene expression. The sequence is that of Putative CCR4-associated factor 1 homolog 8 (CAF1-8) from Arabidopsis thaliana (Mouse-ear cress).